Here is a 435-residue protein sequence, read N- to C-terminus: Enolase (435 aa).

Gln-167 is a binding site for (2R)-2-phosphoglycerate. Glu-209 functions as the Proton donor in the catalytic mechanism. 3 residues coordinate Mg(2+): Asp-246, Glu-291, and Asp-318. (2R)-2-phosphoglycerate contacts are provided by Lys-343, Arg-372, Ser-373, and Lys-394. The active-site Proton acceptor is Lys-343.

Belongs to the enolase family. In terms of assembly, component of the RNA degradosome, a multiprotein complex involved in RNA processing and mRNA degradation. Mg(2+) serves as cofactor.

The protein localises to the cytoplasm. Its subcellular location is the secreted. The protein resides in the cell surface. It carries out the reaction (2R)-2-phosphoglycerate = phosphoenolpyruvate + H2O. The protein operates within carbohydrate degradation; glycolysis; pyruvate from D-glyceraldehyde 3-phosphate: step 4/5. Functionally, catalyzes the reversible conversion of 2-phosphoglycerate (2-PG) into phosphoenolpyruvate (PEP). It is essential for the degradation of carbohydrates via glycolysis. In Psychromonas ingrahamii (strain DSM 17664 / CCUG 51855 / 37), this protein is Enolase.